The sequence spans 285 residues: Energy-coupling factor transporter ATP-binding protein EcfA3 (285 aa).

The region spanning 6 to 242 (LKVEELNYNY…KEVIRKVNLR (237 aa)) is the ABC transporter domain. An ATP-binding site is contributed by 39 to 46 (GGNGVGKS).

Belongs to the ABC transporter superfamily. Energy-coupling factor EcfA family. Forms a stable energy-coupling factor (ECF) transporter complex composed of 2 membrane-embedded substrate-binding proteins (S component), 2 ATP-binding proteins (A component) and 2 transmembrane proteins (T component).

The protein localises to the cell membrane. Its function is as follows. ATP-binding (A) component of a common energy-coupling factor (ECF) ABC-transporter complex. Unlike classic ABC transporters this ECF transporter provides the energy necessary to transport a number of different substrates. The sequence is that of Energy-coupling factor transporter ATP-binding protein EcfA3 from Clostridium perfringens (strain ATCC 13124 / DSM 756 / JCM 1290 / NCIMB 6125 / NCTC 8237 / Type A).